Reading from the N-terminus, the 523-residue chain is Signal peptide peptidase-like 3 (523 aa).

Positions 1-35 are cleaved as a signal peptide; the sequence is MAFPAPSSSSPRRRGRGLAYLLVSVLLLASRVPGA. Residues 36 to 207 lie on the Lumenal side of the membrane; the sequence is AGADSEFEDG…EKPSFDGAIP (172 aa). Positions 110-182 constitute a PA domain; it reads SAPLASSIAV…SQSAGRKILS (73 aa). Residue Asn159 is glycosylated (N-linked (GlcNAc...) asparagine). A helical membrane pass occupies residues 208 to 228; the sequence is FLWLMAVGSVACASVWSFVVV. The Cytoplasmic portion of the chain corresponds to 229–254; sequence GDEDKNAPTLGGEEAADSEIVELQTK. The helical transmembrane segment at 255 to 272 threads the bilayer; it reads TALVFIVTASLVLLFLFF. The Lumenal portion of the chain corresponds to 273–275; it reads FKS. A helical transmembrane segment spans residues 276-298; that stretch reads TWSAWLLVVLFCLSGLQGLHYVA. Residues 299-321 are Cytoplasmic-facing; sequence STLIVRTCDRCREAKVALPVLGN. The chain crosses the membrane as a helical span at residues 322 to 342; the sequence is VTVVTLVILPLALIFVVVWAV. Residues 343–347 are Lumenal-facing; that stretch reads HQNSP. Residues 348–368 traverse the membrane as a helical segment; it reads FAWVGQDLMGICMMILVLQVV. The Cytoplasmic portion of the chain corresponds to 369 to 377; sequence HLPNIKVAT. Residues 378-398 form a helical membrane-spanning segment; that stretch reads ALLVSAFMYDIFWVFISPFIF. Asp387 is a catalytic residue. Over 399–430 the chain is Lumenal; sequence KKSVMITVARGSDEGPSLPMVLKMPKEFDTWN. The chain crosses the membrane as a helical span at residues 431-451; sequence GYDMIGFGDILFPGLLVAFSF. Residue Asp439 is part of the active site. Residues 452-465 lie on the Cytoplasmic side of the membrane; that stretch reads RYDRANGKDLTDGY. A helical membrane pass occupies residues 466-486; it reads FLCLMIGYAFGLSCTYVGLYL. Residues 487 to 489 lie on the Lumenal side of the membrane; it reads MKS. The chain crosses the membrane as a helical span at residues 490 to 510; the sequence is GQPALLYLVPSTLGTIVTLGA. The short motif at 492 to 494 is the PAL element; the sequence is PAL. The Cytoplasmic portion of the chain corresponds to 511–523; the sequence is KRGELSQLWNAKV.

This sequence belongs to the peptidase A22B family. In terms of processing, glycosylated.

The protein resides in the endosome membrane. Intramembrane-cleaving aspartic protease (I-CLiP) that cleaves type II membrane signal peptides in the hydrophobic plane of the membrane. The chain is Signal peptide peptidase-like 3 (SPPL3) from Oryza sativa subsp. japonica (Rice).